Here is a 304-residue protein sequence, read N- to C-terminus: Probable WRKY transcription factor 29 (304 aa).

Disordered stretches follow at residues L76 to L96 and Y185 to A236. The segment covering E78 to K88 has biased composition (basic and acidic residues). A DNA-binding region (WRKY) is located at residues K128–P194. Composition is skewed to polar residues over residues R196–P213 and S225–A236.

It belongs to the WRKY group II-e family.

Its subcellular location is the nucleus. Transcription factor involved in the expression of defense genes in innate immune response of plants. Interacts specifically with the W box (5'-(T)TGAC[CT]-3'), a frequently occurring elicitor-responsive cis-acting element. Activates WRKY 22, SIRK and its own promoters. This chain is Probable WRKY transcription factor 29 (WRKY29), found in Arabidopsis thaliana (Mouse-ear cress).